A 119-amino-acid polypeptide reads, in one-letter code: Fluoride-specific ion channel FluC (119 aa).

Transmembrane regions (helical) follow at residues 5-25 (IIPL…LNLA), 34-54 (TGNL…AETI), 59-79 (WKLL…GFSL), and 97-117 (IFLH…IGAA). Na(+) is bound by residues Gly69 and Thr72.

The protein belongs to the fluoride channel Fluc/FEX (TC 1.A.43) family.

The protein localises to the cell inner membrane. The enzyme catalyses fluoride(in) = fluoride(out). Na(+) is not transported, but it plays an essential structural role and its presence is essential for fluoride channel function. Its function is as follows. Fluoride-specific ion channel. Important for reducing fluoride concentration in the cell, thus reducing its toxicity. The protein is Fluoride-specific ion channel FluC of Neisseria meningitidis serogroup C / serotype 2a (strain ATCC 700532 / DSM 15464 / FAM18).